Consider the following 179-residue polypeptide: Large ribosomal subunit protein uL5 (179 aa).

This sequence belongs to the universal ribosomal protein uL5 family. Part of the 50S ribosomal subunit; part of the 5S rRNA/L5/L18/L25 subcomplex. Contacts the 5S rRNA and the P site tRNA. Forms a bridge to the 30S subunit in the 70S ribosome.

In terms of biological role, this is one of the proteins that bind and probably mediate the attachment of the 5S RNA into the large ribosomal subunit, where it forms part of the central protuberance. In the 70S ribosome it contacts protein S13 of the 30S subunit (bridge B1b), connecting the 2 subunits; this bridge is implicated in subunit movement. Contacts the P site tRNA; the 5S rRNA and some of its associated proteins might help stabilize positioning of ribosome-bound tRNAs. This Clostridium botulinum (strain Alaska E43 / Type E3) protein is Large ribosomal subunit protein uL5.